Here is a 71-residue protein sequence, read N- to C-terminus: MPSVKVRDNEPFDVALRRFKRSCEKAGVLSEVRRRETYEKPTAVRKRKAAAAVKRHAKKLQRERKRFERLY.

This sequence belongs to the bacterial ribosomal protein bS21 family.

The sequence is that of Small ribosomal subunit protein bS21 from Chromohalobacter salexigens (strain ATCC BAA-138 / DSM 3043 / CIP 106854 / NCIMB 13768 / 1H11).